The primary structure comprises 160 residues: Variant surface antigen C (160 aa).

A signal peptide spans 1–29; the sequence is MKKSIFSKKLLVSFGSLVALASIPLIAIS. Cysteine 30 carries N-palmitoyl cysteine lipidation. Cysteine 30 carries S-diacylglycerol cysteine lipidation. The interval 32-160 is disordered; sequence QTNTDKSQQP…SSESGSQKTT (129 aa). 2 stretches are compositionally biased toward low complexity: residues 38-54 and 62-87; these read SQQPGSGSSTSGDQSGT and SGTSTSGGQSGTTSGSGTTTGEQTET. 6 tandem repeats follow at residues 86–97, 98–109, 110–121, 122–133, 134–145, and 146–157. The interval 86-157 is 6 X 12 AA tandem repeats; it reads ETAPKSPESG…APKSSESGSQ (72 aa). Polar residues predominate over residues 93 to 160; sequence ESGSQEATPK…SSESGSQKTT (68 aa).

Its subcellular location is the cell membrane. Responsible for the antigenic diversity for host adaptation. The sequence is that of Variant surface antigen C (vlpC) from Mesomycoplasma hyorhinis (Mycoplasma hyorhinis).